We begin with the raw amino-acid sequence, 407 residues long: Argininosuccinate synthase (407 aa).

ATP is bound by residues 13 to 21 (AYSGGLDTS) and A40. 2 residues coordinate L-citrulline: Y91 and S96. Position 121 (G121) interacts with ATP. Positions 123, 127, and 128 each coordinate L-aspartate. N127 is a binding site for L-citrulline. Residues R131, S182, S191, E267, and Y279 each coordinate L-citrulline.

This sequence belongs to the argininosuccinate synthase family. Type 1 subfamily. Homotetramer.

The protein resides in the cytoplasm. It carries out the reaction L-citrulline + L-aspartate + ATP = 2-(N(omega)-L-arginino)succinate + AMP + diphosphate + H(+). It participates in amino-acid biosynthesis; L-arginine biosynthesis; L-arginine from L-ornithine and carbamoyl phosphate: step 2/3. This chain is Argininosuccinate synthase, found in Bartonella bacilliformis (strain ATCC 35685 / KC583 / Herrer 020/F12,63).